Consider the following 78-residue polypeptide: Small ribosomal subunit protein bS20 (78 aa).

Belongs to the bacterial ribosomal protein bS20 family.

Binds directly to 16S ribosomal RNA. This chain is Small ribosomal subunit protein bS20, found in Streptococcus sanguinis (strain SK36).